The following is a 468-amino-acid chain: Glutamate--tRNA ligase (468 aa).

The 'HIGH' region signature appears at 11–21 (PSPTGFIHLGN). The 'KMSKS' region signature appears at 243-247 (KMSKR). Position 246 (Lys-246) interacts with ATP.

The protein belongs to the class-I aminoacyl-tRNA synthetase family. Glutamate--tRNA ligase type 1 subfamily. Monomer.

The protein resides in the cytoplasm. The catalysed reaction is tRNA(Glu) + L-glutamate + ATP = L-glutamyl-tRNA(Glu) + AMP + diphosphate. Catalyzes the attachment of glutamate to tRNA(Glu) in a two-step reaction: glutamate is first activated by ATP to form Glu-AMP and then transferred to the acceptor end of tRNA(Glu). The protein is Glutamate--tRNA ligase of Cupriavidus pinatubonensis (strain JMP 134 / LMG 1197) (Cupriavidus necator (strain JMP 134)).